The following is a 330-amino-acid chain: Aquaporin Lacbi1:307192 (330 aa).

Residues 1 to 40 lie on the Cytoplasmic side of the membrane; that stretch reads MSATPIIHLRDVKKRTGVLNAWERVRNKPQVHWAMECFAE. A helical transmembrane segment spans residues 41 to 61; it reads ALGVFFYVYFGLGSTAAWVIG. Topologically, residues 62 to 71 are extracellular; the sequence is NILKQSGLSS. Residues 72–92 form a helical membrane-spanning segment; sequence VFQIGFAYAFGILFAIGVCAA. At 93–124 the chain is on the cytoplasmic side; it reads TSGGHFNPCVTIAFTIFRGFPPLKAVRYIVAQ. The NPA 1 motif lies at 99 to 101; sequence NPC. The helical transmembrane segment at 125-145 threads the bilayer; that stretch reads ILGAYIASALVYNQWKVLIVE. At 146–157 the chain is on the extracellular side; the sequence is SELLLKQAGVYE. The helical transmembrane segment at 158 to 178 threads the bilayer; sequence TTMFTPNGPAGIFALYLLPGA. The Cytoplasmic segment spans residues 179 to 183; that stretch reads QTLPR. The chain crosses the membrane as a helical span at residues 184–204; the sequence is AFLNEFVNCFVLALVIWAALD. The Extracellular portion of the chain corresponds to 205–207; that stretch reads PTS. Residues 208–228 form a helical membrane-spanning segment; the sequence is FMIPPVMAPFIIAAAYAGSIW. Topologically, residues 229-264 are cytoplasmic; that stretch reads GYAVPAISLNSARDIGCRLFALTIWGKSAAGGSYSA. Residues 238–240 carry the NPA 2 motif; sequence NSA. The helical transmembrane segment at 265 to 285 threads the bilayer; sequence ITALVNIPATLLAAVVYELFL. The Extracellular segment spans residues 286–330; it reads VDSDRVVAGSHLEFMNVAANHRRHRHQAEDDNHGDADDSSQEKPV. The segment at 308 to 330 is disordered; it reads RHRHQAEDDNHGDADDSSQEKPV. Positions 312–330 are enriched in basic and acidic residues; the sequence is QAEDDNHGDADDSSQEKPV.

The protein belongs to the MIP/aquaporin (TC 1.A.8) family.

It is found in the membrane. Functionally, water channel-like protein that does not show transport of water nor ammonium across membranes. This chain is Aquaporin Lacbi1:307192, found in Laccaria bicolor (strain S238N-H82 / ATCC MYA-4686) (Bicoloured deceiver).